The primary structure comprises 267 residues: Corrinoid adenosyltransferase EutT (267 aa).

The a divalent metal cation site is built by cysteine 80 and cysteine 83.

This sequence belongs to the Cob(I)alamin adenosyltransferase family. EutT subfamily. In terms of assembly, homodimer. The cofactor is a divalent metal cation.

It localises to the bacterial microcompartment. It carries out the reaction 2 cob(II)alamin + reduced [electron-transfer flavoprotein] + 2 ATP + 2 H2O = 2 adenosylcob(III)alamin + oxidized [electron-transfer flavoprotein] + 2 phosphate + 2 diphosphate + 3 H(+). The catalysed reaction is 2 cob(II)inamide + reduced [electron-transfer flavoprotein] + 2 ATP + 2 H2O = 2 adenosylcob(III)inamide + oxidized [electron-transfer flavoprotein] + 2 phosphate + 2 diphosphate + 3 H(+). It participates in amine and polyamine degradation; ethanolamine degradation. Functionally, converts cyanocobalamin (CN-B12) to adenosylcobalamin (AdoCbl), the inducer of the eut operon. Is not active on cobinamide nor other intermediates in the adenosylcobalamin synthetic pathway. Allows full induction of the eut operon. Can use ADP, CTP and dATP in place of ATP, and cobinamide in place of cobalamin, none are as efficiently used as ATP and cobalamin. Expression of the eut operon allows this bacteria to use ethanolamine (EA) as a carbon, nitrogen and energy source. It relies on cobalamin (vitamin B12) both as a cofactor for the ethanolamine ammonia-lyase (EAL) activity and to induce the operon. EA enhances bacterial survival in macrophages in a concentration-dependent manner, suggesting it is an important nutrient during infection. The protein is Corrinoid adenosyltransferase EutT of Salmonella typhimurium (strain LT2 / SGSC1412 / ATCC 700720).